The sequence spans 239 residues: 7-cyano-7-deazaguanine synthase (239 aa).

13–23 (FSGGQDSTTCL) provides a ligand contact to ATP. Zn(2+)-binding residues include Cys192, Cys201, Cys204, and Cys207.

This sequence belongs to the QueC family. Requires Zn(2+) as cofactor.

The catalysed reaction is 7-carboxy-7-deazaguanine + NH4(+) + ATP = 7-cyano-7-deazaguanine + ADP + phosphate + H2O + H(+). Its pathway is purine metabolism; 7-cyano-7-deazaguanine biosynthesis. Functionally, catalyzes the ATP-dependent conversion of 7-carboxy-7-deazaguanine (CDG) to 7-cyano-7-deazaguanine (preQ(0)). The sequence is that of 7-cyano-7-deazaguanine synthase from Shewanella sp. (strain MR-7).